The primary structure comprises 470 residues: ATP synthase subunit beta (470 aa).

Residue 157–164 participates in ATP binding; the sequence is GGAGVGKT.

Belongs to the ATPase alpha/beta chains family. As to quaternary structure, F-type ATPases have 2 components, CF(1) - the catalytic core - and CF(0) - the membrane proton channel. CF(1) has five subunits: alpha(3), beta(3), gamma(1), delta(1), epsilon(1). CF(0) has three main subunits: a(1), b(2) and c(9-12). The alpha and beta chains form an alternating ring which encloses part of the gamma chain. CF(1) is attached to CF(0) by a central stalk formed by the gamma and epsilon chains, while a peripheral stalk is formed by the delta and b chains.

It is found in the cell inner membrane. It carries out the reaction ATP + H2O + 4 H(+)(in) = ADP + phosphate + 5 H(+)(out). Its function is as follows. Produces ATP from ADP in the presence of a proton gradient across the membrane. The catalytic sites are hosted primarily by the beta subunits. This chain is ATP synthase subunit beta, found in Geobacter sulfurreducens (strain ATCC 51573 / DSM 12127 / PCA).